A 40-amino-acid polypeptide reads, in one-letter code: MADTTGRIPLWLIGTVTGIIVIGLLGIFFYGSYSGLGSSL.

A helical transmembrane segment spans residues 8 to 28 (IPLWLIGTVTGIIVIGLLGIF).

The protein belongs to the PsbJ family. As to quaternary structure, PSII is composed of 1 copy each of membrane proteins PsbA, PsbB, PsbC, PsbD, PsbE, PsbF, PsbH, PsbI, PsbJ, PsbK, PsbL, PsbM, PsbT, PsbX, PsbY, PsbZ, Psb30/Ycf12, at least 3 peripheral proteins of the oxygen-evolving complex and a large number of cofactors. It forms dimeric complexes.

It is found in the plastid. The protein resides in the chloroplast thylakoid membrane. Functionally, one of the components of the core complex of photosystem II (PSII). PSII is a light-driven water:plastoquinone oxidoreductase that uses light energy to abstract electrons from H(2)O, generating O(2) and a proton gradient subsequently used for ATP formation. It consists of a core antenna complex that captures photons, and an electron transfer chain that converts photonic excitation into a charge separation. The protein is Photosystem II reaction center protein J of Pinus koraiensis (Korean pine).